The following is a 391-amino-acid chain: Secreted aspartic protease 1 (391 aa).

Residues 1–18 (MFLKNIFIALAIALLVDA) form the signal peptide. Residues 19–50 (SPAKRSPGFVTLDFDVIKTPVNATGQEGKVKR) constitute a propeptide, activation peptide. N-linked (GlcNAc...) asparagine glycosylation is present at N40. Residues 64-377 (YAADITIGSN…DLDDDKISLA (314 aa)) enclose the Peptidase A1 domain. D82 is a catalytic residue. 82–84 (DTG) provides a ligand contact to pepstatin A. Cysteines 97 and 109 form a disulfide. A pepstatin A-binding site is contributed by 135 to 136 (GD). The Zn(2+) site is built by D241 and D263. D267 is a catalytic residue. 267–271 (DSGTT) serves as a coordination point for pepstatin A. An intrachain disulfide couples C305 to C343.

Belongs to the peptidase A1 family. Monomer.

Its subcellular location is the secreted. The enzyme catalyses Preferential cleavage at the carboxyl of hydrophobic amino acids, but fails to cleave 15-Leu-|-Tyr-16, 16-Tyr-|-Leu-17 and 24-Phe-|-Phe-25 of insulin B chain. Activates trypsinogen, and degrades keratin.. Inhibited by pepstatin A analogs and squash aspartic peptidase inhibitor (SQAPI). Secreted aspartic peptidases (SAPs) are a group of ten acidic hydrolases considered as key virulence factors. These enzymes supply the fungus with nutrient amino acids as well as are able to degrade the selected host's proteins involved in the immune defense. Induces host inflammatory cytokine production in a proteolytic activity-independent way. Plays a role in tissue damage during superficial infection. Moreover, acts toward human hemoglobin though limited proteolysis to generate a variety of antimicrobial hemocidins, enabling to compete with the other microorganisms of the same physiological niche using the microbicidal peptides generated from the host protein. Functionally, plays a key role in defense against host by cleaving histatin-5 (Hst 5), a peptide from human saliva that carries out fungicidal activity. The cleavage rate decreases in an order of SAP2 &gt; SAP9 &gt; SAP3 &gt; SAP7 &gt; SAP4 &gt; SAP1 &gt; SAP8. The first cleavage occurs between residues 'Lys-17' and 'His-18' of Hst 5, giving DSHAKRHHGYKRKFHEK and HHSHRGY peptides. Further fragmentation by SAP1 results in AKRHHGYKRKFHEK and AKRHHGY products. The protein is Secreted aspartic protease 1 of Candida albicans (strain SC5314 / ATCC MYA-2876) (Yeast).